A 610-amino-acid chain; its full sequence is Menin (610 aa).

The interval 214–390 (GVAERSWLYL…SLLEAGEERP (177 aa)) is interaction with FANCD2. Disordered stretches follow at residues 385–404 (AGEERPGEQTQGTQSQGSAL) and 460–552 (REAE…PVLT). Low complexity predominate over residues 393–402 (QTQGTQSQGS). Residues 484 to 500 (RRESKPEEPPPPKKPAL) are compositionally biased toward basic and acidic residues. S487 carries the phosphoserine modification. Composition is skewed to pro residues over residues 512–521 (PGPPRKPPGT) and 537–548 (VPAPAASPPPEG). A Phosphoserine modification is found at S543. T594 carries the phosphothreonine modification.

As to quaternary structure, component of the MLL-HCF complex, at least composed of KMT2A/MLL1, MEN1, ASH2L, RBBP5, DPY30, WDR5, HCFC1 and HCFC2. Component of the menin-associated histone methyltransferase complex, at least composed of KMT2B/MLL4, MEN1, ASH2L, RBBP5, DPY30 and WDR5. Interacts with POLR2B. Interacts with POLR2A phosphorylated at 'Ser-5', but not with the unphosphorylated, nor 'Ser-2' phosphorylated POLR2A forms. Interacts with FANCD2 and DBF4. Interacts with SMAD3, but not with SMAD2, nor SMAD4. Directly interacts with NFKB1, NFKB2 and RELA. Interacts with JUND (via MBM motif); inhibits the interaction of JUND with MAPK10 and the phosphorylation of JUND by MAP kinases MAPK8 and MAPK10. Interacts with KMT2A (via MBM motif). The KMT2A-MEN1 complex interacts with PSIP1 with a greater affinity as MEN1 enhances interaction of KMT2A with PSIP1.

Its subcellular location is the nucleus. In terms of biological role, essential component of a MLL/SET1 histone methyltransferase (HMT) complex, a complex that specifically methylates 'Lys-4' of histone H3 (H3K4). Functions as a transcriptional regulator. Binds to the TERT promoter and represses telomerase expression. Plays a role in TGFB1-mediated inhibition of cell-proliferation, possibly regulating SMAD3 transcriptional activity. Represses JUND-mediated transcriptional activation on AP1 sites, as well as that mediated by NFKB subunit RELA. Positively regulates HOXC8 and HOXC6 gene expression. May be involved in normal hematopoiesis through the activation of HOXA9 expression. May be involved in DNA repair. The chain is Menin (MEN1) from Bos taurus (Bovine).